A 414-amino-acid polypeptide reads, in one-letter code: 3-phosphoshikimate 1-carboxyvinyltransferase (414 aa).

3-phosphoshikimate-binding residues include Lys20, Ser21, and Arg25. Lys20 provides a ligand contact to phosphoenolpyruvate. Gly88 and Arg116 together coordinate phosphoenolpyruvate. 6 residues coordinate 3-phosphoshikimate: Thr157, Ser158, Gln159, Ser183, Asp297, and Lys324. Gln159 provides a ligand contact to phosphoenolpyruvate. Asp297 acts as the Proton acceptor in catalysis. Positions 328, 369, and 395 each coordinate phosphoenolpyruvate.

Belongs to the EPSP synthase family. Monomer.

It is found in the cytoplasm. The enzyme catalyses 3-phosphoshikimate + phosphoenolpyruvate = 5-O-(1-carboxyvinyl)-3-phosphoshikimate + phosphate. It functions in the pathway metabolic intermediate biosynthesis; chorismate biosynthesis. Catalyzes the transfer of the enolpyruvyl moiety of phosphoenolpyruvate (PEP) to the 5-hydroxyl of shikimate-3-phosphate (S3P) to produce enolpyruvyl shikimate-3-phosphate and inorganic phosphate. In Caldivirga maquilingensis (strain ATCC 700844 / DSM 13496 / JCM 10307 / IC-167), this protein is 3-phosphoshikimate 1-carboxyvinyltransferase.